A 79-amino-acid polypeptide reads, in one-letter code: DNA-directed RNA polymerase subunit omega (79 aa).

Belongs to the RNA polymerase subunit omega family. As to quaternary structure, the RNAP catalytic core consists of 2 alpha, 1 beta, 1 beta' and 1 omega subunit. When a sigma factor is associated with the core the holoenzyme is formed, which can initiate transcription.

It carries out the reaction RNA(n) + a ribonucleoside 5'-triphosphate = RNA(n+1) + diphosphate. Promotes RNA polymerase assembly. Latches the N- and C-terminal regions of the beta' subunit thereby facilitating its interaction with the beta and alpha subunits. This chain is DNA-directed RNA polymerase subunit omega, found in Thermotoga neapolitana (strain ATCC 49049 / DSM 4359 / NBRC 107923 / NS-E).